We begin with the raw amino-acid sequence, 820 residues long: Leucine--tRNA ligase (820 aa).

A 'HIGH' region motif is present at residues 42–52 (PYPSGDLHMGH). The 'KMSKS' region motif lies at 576–580 (KMSKS). K579 contacts ATP.

It belongs to the class-I aminoacyl-tRNA synthetase family.

The protein localises to the cytoplasm. It carries out the reaction tRNA(Leu) + L-leucine + ATP = L-leucyl-tRNA(Leu) + AMP + diphosphate. This chain is Leucine--tRNA ligase, found in Coxiella burnetii (strain CbuG_Q212) (Coxiella burnetii (strain Q212)).